Reading from the N-terminus, the 696-residue chain is C2 domain-containing protein 2 (696 aa).

Residues 13–33 traverse the membrane as a helical segment; that stretch reads AQWLALVSLFVAALATVGLYL. Residues 51 to 242 form the SMP-LBD domain; it reads EPGEGPRPGS…PTTVKEAQNL (192 aa). Phosphoserine is present on Ser60. The 118-residue stretch at 245-362 folds into the C2 domain; the sequence is AASTAQESCP…KKQPSGPQSF (118 aa). A phosphoserine mark is found at Ser435 and Ser441. Thr445 carries the post-translational modification Phosphothreonine. A disordered region spans residues 539-580; it reads VDSTHQEDAPSHPERAAASAPPEEAESAQASLAPKPQEDELD. Residues 542–553 are compositionally biased toward basic and acidic residues; that stretch reads THQEDAPSHPER. Positions 554–572 are enriched in low complexity; that stretch reads AAASAPPEEAESAQASLAP. Phosphoserine is present on Ser581.

It localises to the membrane. The sequence is that of C2 domain-containing protein 2 (C2CD2) from Homo sapiens (Human).